The sequence spans 116 residues: Ribonuclease T (116 aa).

Residues 18–99 (KRAILVGHNS…YDTEKTAELF (82 aa)) form the Exonuclease domain. His86 serves as the catalytic Proton donor/acceptor.

Belongs to the RNase T family. Homodimer.

In terms of biological role, trims short 3' overhangs of a variety of RNA species, leaving a one or two nucleotide 3' overhang. Responsible for the end-turnover of tRNA: specifically removes the terminal AMP residue from uncharged tRNA (tRNA-C-C-A). Also appears to be involved in tRNA biosynthesis. In Azotobacter vinelandii, this protein is Ribonuclease T.